The sequence spans 611 residues: Poly(3-hydroxyalkanoate) polymerase subunit PhaC (611 aa).

C349 is a catalytic residue.

Belongs to the PHA/PHB synthase family. Type I PhaC subfamily. In terms of assembly, monomer.

It localises to the cytoplasm. It carries out the reaction (3R)-3-hydroxybutanoyl-CoA + [(3R)-hydroxybutanoate](n) = [(3R)-hydroxybutanoate](n+1) + CoA. Its pathway is biopolymer metabolism; poly-(R)-3-hydroxybutanoate biosynthesis. In terms of biological role, polymerizes D(-)-3-hydroxybutyryl-CoA to create PHB which consists of thousands of hydroxybutyrate molecules linked end to end. PHB serves as an intracellular energy reserve material when cells grow under conditions of nutrient limitation. The sequence is that of Poly(3-hydroxyalkanoate) polymerase subunit PhaC from Rhizobium meliloti (strain 1021) (Ensifer meliloti).